A 488-amino-acid polypeptide reads, in one-letter code: Cobyric acid synthase (488 aa).

In terms of domain architecture, GATase cobBQ-type spans 247-440; it reads LLRVIVPVLP…VHGVFDEPTA (194 aa). Catalysis depends on Cys328, which acts as the Nucleophile. His432 is a catalytic residue.

It belongs to the CobB/CobQ family. CobQ subfamily.

It functions in the pathway cofactor biosynthesis; adenosylcobalamin biosynthesis. Functionally, catalyzes amidations at positions B, D, E, and G on adenosylcobyrinic A,C-diamide. NH(2) groups are provided by glutamine, and one molecule of ATP is hydrogenolyzed for each amidation. The polypeptide is Cobyric acid synthase (Cupriavidus pinatubonensis (strain JMP 134 / LMG 1197) (Cupriavidus necator (strain JMP 134))).